Here is a 137-residue protein sequence, read N- to C-terminus: Cytochrome b5 (137 aa).

Residues K6 to D82 enclose the Cytochrome b5 heme-binding domain. H41 and H65 together coordinate heme. The chain crosses the membrane as a helical span at residues F108–I128.

Belongs to the cytochrome b5 family.

It is found in the endoplasmic reticulum membrane. The protein localises to the microsome membrane. Membrane bound hemoprotein which function as an electron carrier for several membrane bound oxygenases. The sequence is that of Cytochrome b5 from Oryza sativa subsp. japonica (Rice).